The primary structure comprises 245 residues: NAD-dependent protein deacylase 1 (245 aa).

The 243-residue stretch at 1-243 folds into the Deacetylase sirtuin-type domain; sequence MDEKLLKTIA…DELVRHVRKA (243 aa). NAD(+) is bound at residue 20 to 39; sequence GAGVSAESGIPTFRGKDGLW. Substrate is bound by residues Tyr64 and Arg67. 98–101 provides a ligand contact to NAD(+); it reads QNVD. His116 acts as the Proton acceptor in catalysis. Positions 124, 127, 145, and 148 each coordinate Zn(2+). NAD(+)-binding positions include 185–187, 211–213, and Ala229; these read GTS and NPD.

The protein belongs to the sirtuin family. Class III subfamily. It depends on Zn(2+) as a cofactor.

The protein resides in the cytoplasm. The catalysed reaction is N(6)-acetyl-L-lysyl-[protein] + NAD(+) + H2O = 2''-O-acetyl-ADP-D-ribose + nicotinamide + L-lysyl-[protein]. It carries out the reaction N(6)-succinyl-L-lysyl-[protein] + NAD(+) + H2O = 2''-O-succinyl-ADP-D-ribose + nicotinamide + L-lysyl-[protein]. Functionally, NAD-dependent lysine deacetylase and desuccinylase that specifically removes acetyl and succinyl groups on target proteins. Modulates the activities of several proteins which are inactive in their acylated form. Deacetylates the N-terminal lysine residue of Alba, the major archaeal chromatin protein and that, in turn, increases Alba's DNA binding affinity, thereby repressing transcription. In Archaeoglobus fulgidus (strain ATCC 49558 / DSM 4304 / JCM 9628 / NBRC 100126 / VC-16), this protein is NAD-dependent protein deacylase 1.